Here is a 118-residue protein sequence, read N- to C-terminus: Large ribosomal subunit protein bL19 (118 aa).

This sequence belongs to the bacterial ribosomal protein bL19 family.

In terms of biological role, this protein is located at the 30S-50S ribosomal subunit interface and may play a role in the structure and function of the aminoacyl-tRNA binding site. The protein is Large ribosomal subunit protein bL19 of Nautilia profundicola (strain ATCC BAA-1463 / DSM 18972 / AmH).